The sequence spans 217 residues: FGFR1 oncogene partner 2 homolog (217 aa).

Coiled coils occupy residues 6–106 (TIEK…MSKY) and 163–188 (KEQE…TRES). Residues 194-217 (KEDASESTSLSGLVTSSDLSLRKS) are disordered. A compositionally biased stretch (polar residues) spans 199–217 (ESTSLSGLVTSSDLSLRKS).

Belongs to the SIKE family.

The protein resides in the cytoplasm. The protein is FGFR1 oncogene partner 2 homolog (FGFR1OP2) of Gallus gallus (Chicken).